The primary structure comprises 224 residues: Urease accessory protein UreF (224 aa).

This sequence belongs to the UreF family. As to quaternary structure, ureD, UreF and UreG form a complex that acts as a GTP-hydrolysis-dependent molecular chaperone, activating the urease apoprotein by helping to assemble the nickel containing metallocenter of UreC. The UreE protein probably delivers the nickel.

It is found in the cytoplasm. Functionally, required for maturation of urease via the functional incorporation of the urease nickel metallocenter. The sequence is that of Urease accessory protein UreF from Pseudomonas fluorescens (strain ATCC BAA-477 / NRRL B-23932 / Pf-5).